Here is a 38-residue protein sequence, read N- to C-terminus: Anthranilate phosphoribosyltransferase (38 aa).

This sequence belongs to the anthranilate phosphoribosyltransferase family. Homodimer.

The enzyme catalyses N-(5-phospho-beta-D-ribosyl)anthranilate + diphosphate = 5-phospho-alpha-D-ribose 1-diphosphate + anthranilate. It participates in amino-acid biosynthesis; L-tryptophan biosynthesis; L-tryptophan from chorismate: step 2/5. In terms of biological role, catalyzes the transfer of the phosphoribosyl group of 5-phosphorylribose-1-pyrophosphate (PRPP) to anthranilate to yield N-(5'-phosphoribosyl)-anthranilate (PRA). The chain is Anthranilate phosphoribosyltransferase (trpD) from Serratia marcescens.